Reading from the N-terminus, the 116-residue chain is Large ribosomal subunit protein P2 (116 aa).

A disordered region spans residues 60–116; it reads GKLSSMPSGGGVAAAAGGGGAAAGGGGAAPAAEEKKEEKKEESEEESDDDMGFGLFD. The span at 67-87 shows a compositional bias: gly residues; the sequence is SGGGVAAAAGGGGAAAGGGGA. Residues 91-101 show a composition bias toward basic and acidic residues; that stretch reads AEEKKEEKKEE.

This sequence belongs to the eukaryotic ribosomal protein P1/P2 family. P1 and P2 exist as dimers at the large ribosomal subunit. In terms of processing, phosphorylated.

Functionally, plays an important role in the elongation step of protein synthesis. The chain is Large ribosomal subunit protein P2 from Branchiostoma floridae (Florida lancelet).